The primary structure comprises 1018 residues: Thrombospondin type-1 domain-containing protein 4 (1018 aa).

Residues 1–26 (MVSYLTSCLSALSTLLLLLGSQLVCP) form the signal peptide. Disordered stretches follow at residues 34–56 (KVPQ…SPGV), 116–240 (HRSQ…PSEA), and 534–623 (SPQV…NWKQ). The TSP type-1 1 domain maps to 54–307 (PGVWGSWGPW…YKLCNTNACP (254 aa)). The span at 187 to 199 (QRLRRQRPSSRHS) shows a compositional bias: basic residues. Residues 216 to 230 (HQFSHSQPLYQSDSG) show a composition bias toward polar residues. 2 stretches are compositionally biased toward basic and acidic residues: residues 558–573 (QEDR…KEDS) and 592–603 (RHPERFPSHRPD). TSP type-1 domains lie at 676-737 (CPAF…KICS), 739-792 (WQIR…DMGP), 793-851 (CAKS…GPCT), 852-911 (GKVE…HLKP), and 912-968 (CGAK…QDCV). Positions 971–1008 (VDENCKDKYYNCNVVVQARLCVYNYYKTACCASCTRVA) constitute a PLAC domain.

Isoform 2 interacts with FBN1. Isoform 2 may interact with TGFB1. In terms of tissue distribution, both isoforms are expressed in the embryo from 7 dpc through 17. Isoform 1 is widely expressed in adult tissues. Isoform 2 is detected in brain, spinal cord, eye, kidney, stomach and uterus. Mainly observed in fibrillar extracellular matrices in elastic tissues (at protein level).

The protein localises to the secreted. It is found in the extracellular space. It localises to the extracellular matrix. Functionally, promotes FBN1 matrix assembly. Attenuates TGFB signaling, possibly by accelerating the sequestration of large latent complexes of TGFB or active TGFB by FBN1 microfibril assembly, thereby negatively regulating the expression of TGFB regulatory targets, such as POSTN. This is Thrombospondin type-1 domain-containing protein 4 (Thsd4) from Mus musculus (Mouse).